The chain runs to 739 residues: NAD(P)H-quinone oxidoreductase subunit 5, chloroplastic (739 aa).

A run of 16 helical transmembrane segments spans residues 9-29 (WVIP…LFFI), 39-59 (IWAF…VQLS), 89-109 (IDPL…LVLI), 125-145 (FVYI…SNLI), 147-167 (IYFF…FWFT), 185-205 (GDFG…SLEF), 219-239 (NGIN…GAVA), 258-278 (TPIS…FLLA), 280-300 (LLPL…VGTI), 327-347 (LGYM…FHLI), 354-374 (ALLF…VGYS), 396-416 (STFL…CFWS), 425-445 (WLYS…TAFY), 542-562 (LFPL…GISF), 610-630 (SLAI…YSFF), and 719-739 (ISSY…FFLF).

It belongs to the complex I subunit 5 family. As to quaternary structure, NDH is composed of at least 16 different subunits, 5 of which are encoded in the nucleus.

Its subcellular location is the plastid. It is found in the chloroplast thylakoid membrane. It catalyses the reaction a plastoquinone + NADH + (n+1) H(+)(in) = a plastoquinol + NAD(+) + n H(+)(out). The enzyme catalyses a plastoquinone + NADPH + (n+1) H(+)(in) = a plastoquinol + NADP(+) + n H(+)(out). In terms of biological role, NDH shuttles electrons from NAD(P)H:plastoquinone, via FMN and iron-sulfur (Fe-S) centers, to quinones in the photosynthetic chain and possibly in a chloroplast respiratory chain. The immediate electron acceptor for the enzyme in this species is believed to be plastoquinone. Couples the redox reaction to proton translocation, and thus conserves the redox energy in a proton gradient. This is NAD(P)H-quinone oxidoreductase subunit 5, chloroplastic (ndhF) from Agrostis stolonifera (Creeping bentgrass).